The following is a 100-amino-acid chain: Urease subunit gamma (100 aa).

It belongs to the urease gamma subunit family. As to quaternary structure, heterotrimer of UreA (gamma), UreB (beta) and UreC (alpha) subunits. Three heterotrimers associate to form the active enzyme.

It is found in the cytoplasm. It catalyses the reaction urea + 2 H2O + H(+) = hydrogencarbonate + 2 NH4(+). The protein operates within nitrogen metabolism; urea degradation; CO(2) and NH(3) from urea (urease route): step 1/1. In terms of biological role, expression of the urease operon increases the likelihood of bacterial survival by contributing to acid resistance in vitro and in vivo in BALB/c mice. Y.enterocolitica enters the body via an oral path and must survive the acidic stomach before being able to colonize the intestinal mucosa. The protein is Urease subunit gamma of Yersinia enterocolitica.